Reading from the N-terminus, the 300-residue chain is UDP-3-O-acyl-N-acetylglucosamine deacetylase (300 aa).

Zn(2+) is bound by residues His78, His237, and Asp241. Residue His264 is the Proton donor of the active site.

Belongs to the LpxC family. It depends on Zn(2+) as a cofactor.

It carries out the reaction a UDP-3-O-[(3R)-3-hydroxyacyl]-N-acetyl-alpha-D-glucosamine + H2O = a UDP-3-O-[(3R)-3-hydroxyacyl]-alpha-D-glucosamine + acetate. It participates in glycolipid biosynthesis; lipid IV(A) biosynthesis; lipid IV(A) from (3R)-3-hydroxytetradecanoyl-[acyl-carrier-protein] and UDP-N-acetyl-alpha-D-glucosamine: step 2/6. Functionally, catalyzes the hydrolysis of UDP-3-O-myristoyl-N-acetylglucosamine to form UDP-3-O-myristoylglucosamine and acetate, the committed step in lipid A biosynthesis. The protein is UDP-3-O-acyl-N-acetylglucosamine deacetylase of Acinetobacter baumannii (strain SDF).